A 536-amino-acid chain; its full sequence is Austinoid biosynthesis cluster protein W (536 aa).

Residues methionine 1–alanine 19 form the signal peptide. Disordered stretches follow at residues glycine 141–proline 164, serine 185–serine 220, phenylalanine 261–glycine 302, proline 385–glycine 423, and proline 491–glutamate 536. A compositionally biased stretch (low complexity) spans serine 195 to aspartate 208. The segment covering serine 209 to serine 220 has biased composition (gly residues). 2 stretches are compositionally biased toward low complexity: residues alanine 287–glycine 302 and alanine 408–glycine 423.

The protein operates within secondary metabolite biosynthesis; terpenoid biosynthesis. Part of the gene cluster that mediates the biosynthesis of calidodehydroaustin, a fungal meroterpenoid. The first step of the pathway is the synthesis of 3,5-dimethylorsellinic acid by the polyketide synthase ausA. 3,5-dimethylorsellinic acid is then prenylated by the polyprenyl transferase ausN. Further epoxidation by the FAD-dependent monooxygenase ausM and cyclization by the probable terpene cyclase ausL lead to the formation of protoaustinoid A. Protoaustinoid A is then oxidized to spiro-lactone preaustinoid A3 by the combined action of the FAD-binding monooxygenases ausB and ausC, and the dioxygenase ausE. Acid-catalyzed keto-rearrangement and ring contraction of the tetraketide portion of preaustinoid A3 by ausJ lead to the formation of preaustinoid A4. The aldo-keto reductase ausK, with the help of ausH, is involved in the next step by transforming preaustinoid A4 into isoaustinone which is in turn hydroxylated by the P450 monooxygenase ausI to form austinolide. The cytochrome P450 monooxygenase ausG modifies austinolide to austinol. Austinol is further acetylated to austin by the O-acetyltransferase ausP, which spontaneously changes to dehydroaustin. The cytochrome P450 monooxygenase ausR then converts dehydroaustin is into 7-dehydrodehydroaustin. The hydroxylation catalyzed by ausR permits the O-acetyltransferase ausQ to add an additional acetyl group to the molecule, leading to the formation of acetoxydehydroaustin. The short chain dehydrogenase ausT catalyzes the reduction of the double bond present between carbon atoms 1 and 2 to convert 7-dehydrodehydroaustin into 1,2-dihydro-7-hydroxydehydroaustin. AusQ catalyzes not only an acetylation reaction but also the addition of the PKS ausV diketide product to 1,2-dihydro-7-hydroxydehydroaustin, forming precalidodehydroaustin. Finally, the iron/alpha-ketoglutarate-dependent dioxygenase converts precalidodehydroaustin into calidodehydroaustin. This Aspergillus calidoustus protein is Austinoid biosynthesis cluster protein W.